The primary structure comprises 97 residues: MKIRPLHDRVIVKRKEVESKSAGGIMLTGSAAGKSTRGEVLAVGRGRSLDNGEIKALDVKVGDTIIFNDGYGVKVEKIDNEEVLIMSESDILAIVEK.

It belongs to the GroES chaperonin family. In terms of assembly, heptamer of 7 subunits arranged in a ring. Interacts with the chaperonin GroEL.

The protein localises to the cytoplasm. Together with the chaperonin GroEL, plays an essential role in assisting protein folding. The GroEL-GroES system forms a nano-cage that allows encapsulation of the non-native substrate proteins and provides a physical environment optimized to promote and accelerate protein folding. GroES binds to the apical surface of the GroEL ring, thereby capping the opening of the GroEL channel. The sequence is that of Co-chaperonin GroES from Baumannia cicadellinicola subsp. Homalodisca coagulata.